We begin with the raw amino-acid sequence, 118 residues long: Large ribosomal subunit protein uL22 (118 aa).

The protein belongs to the universal ribosomal protein uL22 family. As to quaternary structure, part of the 50S ribosomal subunit.

Its function is as follows. This protein binds specifically to 23S rRNA; its binding is stimulated by other ribosomal proteins, e.g. L4, L17, and L20. It is important during the early stages of 50S assembly. It makes multiple contacts with different domains of the 23S rRNA in the assembled 50S subunit and ribosome. The globular domain of the protein is located near the polypeptide exit tunnel on the outside of the subunit, while an extended beta-hairpin is found that lines the wall of the exit tunnel in the center of the 70S ribosome. This is Large ribosomal subunit protein uL22 from Thermomicrobium roseum (strain ATCC 27502 / DSM 5159 / P-2).